Consider the following 294-residue polypeptide: Tetraspanin-15 (294 aa).

The Cytoplasmic segment spans residues 1-23 (MPRGDSEQVRYCARFSYLWLKFS). The helical transmembrane segment at 24 to 44 (LIIYSTVFWLIGALVLSVGIY) threads the bilayer. Topologically, residues 45 to 62 (AEVERQKYKTLESAFLAP) are extracellular. A helical membrane pass occupies residues 63 to 83 (AIILILLGVVMFMVSFIGVLA). Topologically, residues 84 to 93 (SLRDNLYLLQ) are cytoplasmic. A helical membrane pass occupies residues 94-114 (AFMYILGICLIMELIGGVVAL). The Extracellular portion of the chain corresponds to 115 to 235 (TFRNQTIDFL…WFMDNYTIMA (121 aa)). N-linked (GlcNAc...) asparagine glycosylation occurs at N118. 4 disulfides stabilise this stretch: C154/C219, C155/C185, C171/C179, and C186/C198. N-linked (GlcNAc...) asparagine glycosylation is found at N189 and N230. Residues 236-256 (GILLGILLPQFLGVLLTLLYI) form a helical membrane-spanning segment. Topologically, residues 257-294 (TRVEDIIMEHSVTDGLLGPGAKPSVEAAGTGCCLCYPN) are cytoplasmic.

This sequence belongs to the tetraspanin (TM4SF) family. In terms of assembly, interacts with ADAM10; the interaction influences ADAM10 substrate specificity, endocytosis and turnover. Post-translationally, palmitoylated.

It is found in the cell membrane. Its subcellular location is the late endosome membrane. In terms of biological role, part of TspanC8 subgroup, composed of 6 members that interact with the transmembrane metalloprotease ADAM10. This interaction is required for ADAM10 exit from the endoplasmic reticulum and for enzymatic maturation and trafficking to the cell surface as well as substrate specificity. Different TspanC8/ADAM10 complexes have distinct substrates. Promotes ADAM10-mediated cleavage of CDH2. Negatively regulates ligand-induced Notch activity probably by regulating ADAM10 activity. The polypeptide is Tetraspanin-15 (Homo sapiens (Human)).